The primary structure comprises 203 residues: Thymidylate kinase (203 aa).

An ATP-binding site is contributed by 7-14 (GPDGSGKS).

This sequence belongs to the thymidylate kinase family.

It carries out the reaction dTMP + ATP = dTDP + ADP. Phosphorylation of dTMP to form dTDP in both de novo and salvage pathways of dTTP synthesis. The protein is Thymidylate kinase of Finegoldia magna (strain ATCC 29328 / DSM 20472 / WAL 2508) (Peptostreptococcus magnus).